A 154-amino-acid polypeptide reads, in one-letter code: AP-1 complex subunit sigma-3 (154 aa).

Belongs to the adaptor complexes small subunit family. In terms of assembly, adaptor protein complex 1 (AP-1) is a heterotetramer composed of two large adaptins (gamma-type subunit AP1G1 and beta-type subunit AP1B1), a medium adaptin (mu-type subunit AP1M1 or AP1M2) and a small adaptin (sigma-type subunit AP1S1 or AP1S2 or AP1S3). As to expression, widely expressed.

It localises to the golgi apparatus. Its subcellular location is the cytoplasmic vesicle membrane. It is found in the membrane. The protein resides in the clathrin-coated pit. Functionally, subunit of clathrin-associated adaptor protein complex 1 that plays a role in protein sorting in the late-Golgi/trans-Golgi network (TGN) and/or endosomes. The AP complexes mediate both the recruitment of clathrin to membranes and the recognition of sorting signals within the cytosolic tails of transmembrane cargo molecules. Involved in TLR3 trafficking. In Homo sapiens (Human), this protein is AP-1 complex subunit sigma-3 (AP1S3).